A 243-amino-acid polypeptide reads, in one-letter code: Probable transcriptional regulatory protein BAPKO_0024/BafPKo_0025 (243 aa).

It belongs to the TACO1 family.

Its subcellular location is the cytoplasm. This is Probable transcriptional regulatory protein BAPKO_0024/BafPKo_0025 from Borreliella afzelii (strain PKo) (Borrelia afzelii).